Here is a 263-residue protein sequence, read N- to C-terminus: HLA class II histocompatibility antigen, DM beta chain (263 aa).

The signal sequence occupies residues 1-18 (MITFLPLLLGLSLGCTGA). The beta-1 stretch occupies residues 19–112 (GGFVAHVEST…PFWGSLTNRT (94 aa)). Over 19-218 (GGFVAHVEST…PGLSPMQTLK (200 aa)) the chain is Lumenal. Intrachain disulfides connect cysteine 29-cysteine 97 and cysteine 43-cysteine 53. Residue asparagine 110 is glycosylated (N-linked (GlcNAc...) asparagine). The segment at 113–207 (RPPSVQVAKT…GAPEPILRDW (95 aa)) is beta-2. The 95-residue stretch at 114–208 (PPSVQVAKTT…APEPILRDWT (95 aa)) folds into the Ig-like C1-type domain. Cysteines 135 and 192 form a disulfide. The tract at residues 208 to 218 (TPGLSPMQTLK) is connecting peptide. A helical transmembrane segment spans residues 219–239 (VSVSAVTLGLGLIIFSLGVIS). Residues 240 to 263 (WRRAGHSSYTPLPGSNYSEGWHIS) are Cytoplasmic-facing. The YXXZ motif motif lies at 248 to 251 (YTPL).

It belongs to the MHC class II family. Heterodimer of an alpha chain (DMA) and a beta chain (DMB). Interacts with MHCII; this interaction mediates rapid selection of high-affinity peptides in a pH-dependent manner, with an optimum at pH 5.5.

Its subcellular location is the late endosome membrane. The protein localises to the lysosome membrane. Functionally, plays a critical role in catalyzing the release of class II-associated invariant chain peptide (CLIP) from newly synthesized MHC class II molecules and freeing the peptide binding site for acquisition of antigenic peptides. In B-cells, the interaction between HLA-DM and MHC class II molecules is regulated by HLA-DO. The sequence is that of HLA class II histocompatibility antigen, DM beta chain (HLA-DMB) from Homo sapiens (Human).